Consider the following 121-residue polypeptide: Fluoride-specific ion channel FluC 1 (121 aa).

4 helical membrane-spanning segments follow: residues 3-23 (YVYIFIGGALGALLRYLISFL), 35-55 (IANLTGAFVMGLLTALTIAFF), 64-84 (AITTGFLGALTTFSTFQLELI), and 92-112 (FITLLLYAVTSYVFGILLCYV). Positions 71 and 74 each coordinate Na(+).

Belongs to the fluoride channel Fluc/FEX (TC 1.A.43) family.

The protein localises to the cell membrane. The catalysed reaction is fluoride(in) = fluoride(out). With respect to regulation, na(+) is not transported, but it plays an essential structural role and its presence is essential for fluoride channel function. Its function is as follows. Fluoride-specific ion channel. Important for reducing fluoride concentration in the cell, thus reducing its toxicity. The protein is Fluoride-specific ion channel FluC 1 of Staphylococcus aureus (strain NCTC 8325 / PS 47).